A 192-amino-acid chain; its full sequence is MNWYEKLSEYFPIEEMKSKAHMEALLKERSDIYHKDEGKHHILMFAEFDSFIFVDYLYVSKDARGQGLGGKLIAKLKKKNKPILLEVEPVDEDDTDTEKRLRFYQREHFKHAQSIGYRRRSLATNEVNKMEILYWSPKTESEEEILEAMKQTYENIHTYKDEKWYGESYEKTDEVLEIIDEEKQKNIFDQLS.

In terms of domain architecture, N-acetyltransferase spans 1–139 (MNWYEKLSEY…MEILYWSPKT (139 aa)).

Its subcellular location is the cytoplasm. The polypeptide is Putative acetyltransferase YjbC (yjbC) (Bacillus subtilis (strain 168)).